We begin with the raw amino-acid sequence, 250 residues long: uncharacterized protein (250 aa).

A Glycyl lysine isopeptide (Lys-Gly) (interchain with G-Cter in ubiquitin) cross-link involves residue Lys-17. Residues 30–67 (REEDYVATSKDNIHHHPCDWSAKPSQRQNENEQKSTIR) are disordered.

This is an uncharacterized protein from Saccharomyces cerevisiae (strain ATCC 204508 / S288c) (Baker's yeast).